Here is a 257-residue protein sequence, read N- to C-terminus: Pyridoxine 5'-phosphate synthase (257 aa).

Asn6 provides a ligand contact to 3-amino-2-oxopropyl phosphate. 8–9 (DH) is a binding site for 1-deoxy-D-xylulose 5-phosphate. A 3-amino-2-oxopropyl phosphate-binding site is contributed by Arg17. His42 (proton acceptor) is an active-site residue. Residues Arg44 and His49 each contribute to the 1-deoxy-D-xylulose 5-phosphate site. The active-site Proton acceptor is the Glu69. 1-deoxy-D-xylulose 5-phosphate is bound at residue Thr99. The Proton donor role is filled by His211. 3-amino-2-oxopropyl phosphate contacts are provided by residues Gly212 and 233 to 234 (GQ).

The protein belongs to the PNP synthase family. As to quaternary structure, homooctamer; tetramer of dimers.

The protein localises to the cytoplasm. The catalysed reaction is 3-amino-2-oxopropyl phosphate + 1-deoxy-D-xylulose 5-phosphate = pyridoxine 5'-phosphate + phosphate + 2 H2O + H(+). Its pathway is cofactor biosynthesis; pyridoxine 5'-phosphate biosynthesis; pyridoxine 5'-phosphate from D-erythrose 4-phosphate: step 5/5. In terms of biological role, catalyzes the complicated ring closure reaction between the two acyclic compounds 1-deoxy-D-xylulose-5-phosphate (DXP) and 3-amino-2-oxopropyl phosphate (1-amino-acetone-3-phosphate or AAP) to form pyridoxine 5'-phosphate (PNP) and inorganic phosphate. In Campylobacter fetus subsp. fetus (strain 82-40), this protein is Pyridoxine 5'-phosphate synthase.